A 1183-amino-acid polypeptide reads, in one-letter code: Putative ATP-dependent RNA helicase PB1A10.06c (1183 aa).

Disordered stretches follow at residues 1-92 (MGRL…KKRL) and 165-315 (ETTT…RASR). The span at 60–81 (VPKEERQKRKQELKDQLLKENE) shows a compositional bias: basic and acidic residues. Low complexity-rich tracts occupy residues 165-176 (ETTTTKSSTAET) and 184-196 (TRSGFGFGFSTGT). The segment covering 224–251 (EDPEYDSAEEDYLSTDSEEFSEDSDNSS) has biased composition (acidic residues). The span at 252-270 (EENKDTNEPSTKDAEKTVP) shows a compositional bias: basic and acidic residues. The segment covering 292–308 (ENEDFDLETSEDDSSDD) has biased composition (acidic residues). The region spanning 408-585 (MEQIFANDVV…KLLFSVPPPI (178 aa)) is the Helicase ATP-binding domain. 421–428 (GATGSGKT) contacts ATP. Positions 522–525 (DEAH) match the DEAH box motif. Residues 611–831 (AFDKVCLIHK…SIVLQMKNMN (221 aa)) form the Helicase C-terminal domain. The span at 673–683 (EDLQSETEDID) shows a compositional bias: acidic residues. The tract at residues 673–696 (EDLQSETEDIDQVPTSSSSSVTYD) is disordered.

It belongs to the DEAD box helicase family. DEAH subfamily.

It localises to the nucleus. It is found in the nucleolus. The enzyme catalyses ATP + H2O = ADP + phosphate + H(+). This Schizosaccharomyces pombe (strain 972 / ATCC 24843) (Fission yeast) protein is Putative ATP-dependent RNA helicase PB1A10.06c.